A 327-amino-acid chain; its full sequence is uncharacterized protein (327 aa).

The first 24 residues, 1–24 (MKQPGFIRLATLALLSTLSFFSHG), serve as a signal peptide directing secretion.

This is an uncharacterized protein from Salmonella typhimurium (strain LT2 / SGSC1412 / ATCC 700720).